Here is a 126-residue protein sequence, read N- to C-terminus: Protein LLP homolog (126 aa).

Residues 1–21 (MAKSLRSKWRRKMRAEKRKKV) show a composition bias toward basic residues. 2 disordered regions span residues 1–22 (MAKSLRSKWRRKMRAEKRKKVA) and 53–126 (VPPE…RLAW). Residues 73 to 94 (DGGKMDLDTKRNKKTMLDEHGR) are compositionally biased toward basic and acidic residues. Positions 103–126 (QAKKLKAKRVGKNGKPKPKKRLAW) are enriched in basic residues.

The protein belongs to the learning-associated protein family.

Its subcellular location is the nucleus. The protein localises to the nucleolus. It localises to the chromosome. In terms of biological role, regulates dendritic and spine growth and synaptic transmission. This chain is Protein LLP homolog (llph), found in Danio rerio (Zebrafish).